A 507-amino-acid polypeptide reads, in one-letter code: MTLRKTAGYLWNPISLIGFLLAVVATGLIIAFIAMEMITGIDHPYIGLLVYFAFPGMLILGLILVPIGAWRVRNQRRTEVPEEVPPYPRVDFNDPHKRRLFIFFVLASVIFVLIVSVASILGFEFTESTTFCGELCHVVMEPEHKAWQGSPHARVKCVECHVGPGAEWYVKAKLSGLRQVWAVLTHSYHFPIATPIENLRPARDTCEQCHWPEKFYSGRQRVFYHYAPNKENTPREINMLIKIGGTPKSPHAMGIHWHIGTEVTYIARDRKRLDIPYVAVKQKDGSIVEYMDTEKPLTREEIAKAEKRRMDCIDCHNRPTHIYRSPAREMDEHIVSGQIDAGLPYIKKVAVEILEQPYKSKEEAHAAIEAKLPEYYAKNFPEVAKVKAAAINQAVAHVKDIYSRNFFPRMKVTWSTYPNHIGHFYTPGCFRCHDGKHKTSTGKIISKDCNMCHEMIGQKGENIPEGKVVKEFVHPADIGDALYNVNCSDCHMAAAEDSAGGEGPGKH.

3 helical membrane passes run 14–34 (ISLI…AFIA), 45–65 (YIGL…LILV), and 100–120 (LFIF…VASI). Heme is bound by residues C132, C136, M140, H152, C157, C160, H161, D400, C449, C452, H453, C487, C490, H491, and E496.

This sequence belongs to the NapC/NirT/NrfH family. In terms of processing, binds 4 heme c groups covalently per subunit.

The protein resides in the cell inner membrane. In terms of biological role, redox protein involved in a high-potential metal respiratory pathway. Is required only for electron transfer to terminal extracellular electron acceptors with redox potentials higher than -0.1 V. ImcH likely transfers electrons from the quinone pool to a periplasmic acceptor. This is Cytochrome c-type protein ImcH from Geobacter sulfurreducens (strain ATCC 51573 / DSM 12127 / PCA).